A 129-amino-acid polypeptide reads, in one-letter code: Holo-[acyl-carrier-protein] synthase (129 aa).

Residues aspartate 8 and glutamate 58 each contribute to the Mg(2+) site.

It belongs to the P-Pant transferase superfamily. AcpS family. It depends on Mg(2+) as a cofactor.

It is found in the cytoplasm. It carries out the reaction apo-[ACP] + CoA = holo-[ACP] + adenosine 3',5'-bisphosphate + H(+). Functionally, transfers the 4'-phosphopantetheine moiety from coenzyme A to a Ser of acyl-carrier-protein. This Geobacillus kaustophilus (strain HTA426) protein is Holo-[acyl-carrier-protein] synthase.